Consider the following 367-residue polypeptide: MSGTLARIAEIEAEMARTQKNKATAYHLGLLKARLAKLRRELITPKGGGGGGPGEGFDVAKTGDARIGFVGFPSVGKSTLLSNLAGVYSEVAAYEFTTLTTVPGVVRYKGAKIQLLDLPGIIEGAKDGKGRGRQVIAVARTCNLILIVLDVLKPLGHKKIIENELEGFGIRLNKQPPNIGFKKKDKGGINLTATCAQSELDNDTVKSILAEYKIHNADITLRSDATADDLIDVVEGNRVYIPCIYVLNKIDQISIEELDIIYKVPHCVPISAHHRWNFDDLLEKIWDYLQLVRIYTKPKGQLPDYTSPVVLPCSHTAAEDFCTKIHKNLIKEFKYALVWGSSVKHNPQKVGKDHVLEDEDVIQIVKK.

Positions 2–16 (SGTLARIAEIEAEMA) are required for interaction with STK16. Residues 65–290 (ARIGFVGFPS…LLEKIWDYLQ (226 aa)) form the OBG-type G domain. GTP is bound by residues 71–78 (GFPSVGKS), 96–100 (FTTLT), 117–120 (DLPG), 248–251 (NKID), and 271–273 (SAH). Ser-78 and Thr-98 together coordinate Mg(2+). The TGS domain occupies 290–366 (QLVRIYTKPK…EDEDVIQIVK (77 aa)).

Belongs to the TRAFAC class OBG-HflX-like GTPase superfamily. OBG GTPase family. Requires Mg(2+) as cofactor. The cofactor is K(+). In terms of tissue distribution, expressed in many adult amd embryonic tissues. In adults, highest levels in ovaries and testes, followed by skeletal muscle, stomach, brain, kidney and liver. Weak expression in heart and brain.

The protein localises to the nucleus. Its subcellular location is the cytoplasm. It carries out the reaction GTP + H2O = GDP + phosphate + H(+). Catalyzes the conversion of GTP to GDP through hydrolysis of the gamma-phosphate bond in GTP. Binds to microtubules and promotes microtubule polymerization and bundling. GTPase activity is not necessary for these microtubule-related functions. The polypeptide is Developmentally-regulated GTP-binding protein 1 (drg1) (Xenopus laevis (African clawed frog)).